A 448-amino-acid polypeptide reads, in one-letter code: Tubulin beta-1 chain (448 aa).

Positions 11, 69, 138, 142, 143, 144, 204, and 226 each coordinate GTP. Glu69 provides a ligand contact to Mg(2+). The segment at 427 to 448 (DATADEEGDLQEGESEYIEQEE) is disordered. The segment covering 429–448 (TADEEGDLQEGESEYIEQEE) has biased composition (acidic residues).

Belongs to the tubulin family. As to quaternary structure, dimer of alpha and beta chains. A typical microtubule is a hollow water-filled tube with an outer diameter of 25 nm and an inner diameter of 15 nM. Alpha-beta heterodimers associate head-to-tail to form protofilaments running lengthwise along the microtubule wall with the beta-tubulin subunit facing the microtubule plus end conferring a structural polarity. Microtubules usually have 13 protofilaments but different protofilament numbers can be found in some organisms and specialized cells. Mg(2+) serves as cofactor.

Its subcellular location is the cytoplasm. It localises to the cytoskeleton. In terms of biological role, tubulin is the major constituent of microtubules, a cylinder consisting of laterally associated linear protofilaments composed of alpha- and beta-tubulin heterodimers. Microtubules grow by the addition of GTP-tubulin dimers to the microtubule end, where a stabilizing cap forms. Below the cap, tubulin dimers are in GDP-bound state, owing to GTPase activity of alpha-tubulin. This Brugia pahangi (Filarial nematode worm) protein is Tubulin beta-1 chain.